We begin with the raw amino-acid sequence, 311 residues long: Heme A synthase (311 aa).

Over 1 to 6 (MQRFIK) the chain is Cytoplasmic. The chain crosses the membrane as a helical span at residues 7–27 (WLAVITSLDLLVVLLGGALVT). Over 28–62 (KTGSGQGCGKSWPLCNGEFVPSNLSMETIIELSHR) the chain is Extracellular. The cysteines at positions 35 and 42 are disulfide-linked. Residue Glu-58 is part of the active site. His-61 provides a ligand contact to heme o. The helical transmembrane segment at 63 to 83 (LTSGSAGILVTLLCILSWKYY) threads the bilayer. At 84 to 91 (KHVRETKT) the chain is on the cytoplasmic side. The chain crosses the membrane as a helical span at residues 92 to 112 (LAILSFVFLVAQALMGAAAVV). The Extracellular segment spans residues 113-121 (WGQMPAVLA). Residues 122-142 (IHFGISLISFASVILLTCLIF) traverse the membrane as a helical segment. His-123 contacts heme o. Topologically, residues 143–159 (EIDQKFDARSLIMDKKM) are cytoplasmic. The chain crosses the membrane as a helical span at residues 160-180 (KFHIYGVTIYSYIVVYTGALV). At 181–211 (RHERATLACPDFPLCSKSRPMPTQLHEWVQM) the chain is on the extracellular side. A disulfide bridge connects residues Cys-189 and Cys-195. Residues 212 to 232 (GHRVAAMLIFAWILYAMIIAI) traverse the membrane as a helical segment. His-213 contacts heme b. Over 233-243 (RHYKQQRVVYW) the chain is Cytoplasmic. A helical membrane pass occupies residues 244 to 264 (GWIISFILVTLQAIVGILVVF). The Extracellular segment spans residues 265–271 (TNASLAM). A helical transmembrane segment spans residues 272–292 (ALLHSLFISCLFAVLCYLVMI). Residue His-275 coordinates heme b. Topologically, residues 293–311 (GTRSTVNAKETESTSKQTK) are cytoplasmic.

It belongs to the COX15/CtaA family. Type 1 subfamily. As to quaternary structure, interacts with CtaB. Heme b serves as cofactor.

Its subcellular location is the cell membrane. It catalyses the reaction Fe(II)-heme o + 2 A + H2O = Fe(II)-heme a + 2 AH2. It participates in porphyrin-containing compound metabolism; heme A biosynthesis; heme A from heme O: step 1/1. Catalyzes the conversion of heme O to heme A by two successive hydroxylations of the methyl group at C8. The first hydroxylation forms heme I, the second hydroxylation results in an unstable dihydroxymethyl group, which spontaneously dehydrates, resulting in the formyl group of heme A. This Bacillus mycoides (strain KBAB4) (Bacillus weihenstephanensis) protein is Heme A synthase.